The sequence spans 460 residues: Crocetin glucosyltransferase 2 (460 aa).

Histidine 19 serves as the catalytic Proton acceptor. Histidine 19 is a binding site for an anthocyanidin. UDP-alpha-D-glucose is bound by residues threonine 133, glutamine 333, histidine 348, tryptophan 351, asparagine 352, serine 353, glutamate 356, aspartate 372, and glutamine 373.

It belongs to the UDP-glycosyltransferase family. In terms of tissue distribution, mainly expressed in fully developed stigmas.

The catalysed reaction is crocetin + UDP-alpha-D-glucose = beta-D-glucosyl crocetin + UDP. It catalyses the reaction beta-D-glucosyl crocetin + UDP-alpha-D-glucose = bis(beta-D-glucosyl) crocetin + UDP. It carries out the reaction beta-D-gentiobiosyl crocetin + UDP-alpha-D-glucose = beta-D-gentiobiosyl beta-D-glucosyl crocetin + UDP. Functionally, crocetin glucosyltransferase involved in the synthesis of crocin, one of the apocarotenoids responsible for the color and bitter taste of saffron. The polypeptide is Crocetin glucosyltransferase 2 (GLT2) (Crocus sativus (Saffron)).